The chain runs to 130 residues: Small ribosomal subunit protein uS9 (130 aa).

The interval 106-130 (RDSRKVERKKPGLKKARKASQFSKR) is disordered. The segment covering 111 to 130 (VERKKPGLKKARKASQFSKR) has biased composition (basic residues).

Belongs to the universal ribosomal protein uS9 family.

This Streptococcus pneumoniae serotype 2 (strain D39 / NCTC 7466) protein is Small ribosomal subunit protein uS9.